Here is a 141-residue protein sequence, read N- to C-terminus: Protein C19orf12 homolog (141 aa).

The chain crosses the membrane as a helical span at residues 37–57; it reads GLAFAGGLIGGPLGIAVGGAV.

This sequence belongs to the C19orf12 family.

The protein resides in the mitochondrion. It localises to the mitochondrion membrane. Its subcellular location is the endoplasmic reticulum. The protein localises to the cytoplasm. It is found in the cytosol. This chain is Protein C19orf12 homolog, found in Danio rerio (Zebrafish).